The sequence spans 91 residues: uncharacterized protein (91 aa).

Residues 50–70 form a helical membrane-spanning segment; it reads FGFFGGPFIGGLAGGLIGSAL.

Its subcellular location is the cell membrane. This is an uncharacterized protein from Bacillus subtilis (strain 168).